We begin with the raw amino-acid sequence, 185 residues long: Large ribosomal subunit protein uL5 (185 aa).

This sequence belongs to the universal ribosomal protein uL5 family. Part of the 50S ribosomal subunit; part of the 5S rRNA/L5/L18/L25 subcomplex. Contacts the 5S rRNA and the P site tRNA. Forms a bridge to the 30S subunit in the 70S ribosome.

In terms of biological role, this is one of the proteins that bind and probably mediate the attachment of the 5S RNA into the large ribosomal subunit, where it forms part of the central protuberance. In the 70S ribosome it contacts protein S13 of the 30S subunit (bridge B1b), connecting the 2 subunits; this bridge is implicated in subunit movement. Contacts the P site tRNA; the 5S rRNA and some of its associated proteins might help stabilize positioning of ribosome-bound tRNAs. The protein is Large ribosomal subunit protein uL5 of Phocaeicola vulgatus (strain ATCC 8482 / DSM 1447 / JCM 5826 / CCUG 4940 / NBRC 14291 / NCTC 11154) (Bacteroides vulgatus).